A 1979-amino-acid polypeptide reads, in one-letter code: E3 ubiquitin-protein ligase TTC3 (1979 aa).

Residues 1–230 form an interaction with POLG region; sequence MDDFAEGGLS…RHSCMQCVKQ (230 aa). TPR repeat units follow at residues 231-264 and 266-298; these read GELM…RPEN and LLYG…KNTW. Serine 378 is modified (phosphoserine). The tract at residues 422–457 is disordered; it reads CDCHPEFLPPPSQPPRHKGKQKSRNNESEKPSFNSE. 2 TPR repeats span residues 536 to 572 and 576 to 609; these read VLVV…YPNE and CLAY…ISRL. Residues 783 to 811 form a disordered region; the sequence is LAQERMEEDLRESNPPKNEEPEETSDSAQ. Serine 1009 carries the phosphoserine modification. 7 disordered regions span residues 1021 to 1067, 1214 to 1289, 1402 to 1427, 1574 to 1601, 1757 to 1776, 1788 to 1821, and 1873 to 1927; these read NKGK…GPFA, QPDV…EEAK, QGSA…SSDS, KNDG…DEKT, MDSA…GSPT, KGAS…KKPS, and DEQK…PAPD. Positions 1036–1050 are enriched in low complexity; that stretch reads VGSGAASVAPSSEAV. Serine 1060 is modified (phosphoserine). The span at 1214–1227 shows a compositional bias: basic and acidic residues; it reads QPDVKSEALSEDVK. Over residues 1248–1257 the composition is skewed to low complexity; it reads DSDSSSGSAS. The span at 1576–1586 shows a compositional bias: basic and acidic residues; it reads DGFDKECEPHP. Polar residues-rich tracts occupy residues 1788–1799 and 1808–1821; these read KGASQVSPSEQS and GQAT…KKPS. Serine 1794 carries the phosphoserine modification. Over residues 1873-1890 the composition is skewed to basic and acidic residues; it reads DEQKKKKPNPGKDKKTSE. The RING-type; atypical zinc finger occupies 1931–1971; it reads CEICHEIFKSKNMRVLKCGHKFHKGCFKQWLKGQSTCPTCG.

As to quaternary structure, interacts (when phosphorylated on Ser-378) with AKT1, AKT2 and AKT3 (when phosphorylated). Interacts with CIT. Interacts with POLG. Interacts with HSP70. Interacts with SMURF2. Phosphorylation on Ser-378 by Akt is required for ubiquitin ligase activity. In terms of processing, proteolytically cleaved into differently sized N- and C-terminal fragments.

Its subcellular location is the nucleus. It is found in the cytoplasm. It localises to the golgi apparatus. The enzyme catalyses S-ubiquitinyl-[E2 ubiquitin-conjugating enzyme]-L-cysteine + [acceptor protein]-L-lysine = [E2 ubiquitin-conjugating enzyme]-L-cysteine + N(6)-ubiquitinyl-[acceptor protein]-L-lysine.. Its pathway is protein modification; protein ubiquitination. Its function is as follows. E3 ubiquitin-protein ligase which catalyzes the formation of 'Lys-48'-polyubiquitin chains. Mediates the ubiquitination and subsequent degradation of phosphorylated Akt (AKT1, AKT2 and AKT3) in the nucleus. Acts as a terminal regulator of Akt signaling after activation; its phosphorylation by Akt, which is a prerequisite for ubiquitin ligase activity, suggests the existence of a regulation mechanism required to control Akt levels after activation. Positively regulates TGFB1-induced epithelial-mesenchymal transition and myofibroblast differentiation by mediating the ubiquitination and subsequent degradation of SMURF2. Regulates neuronal differentiation by regulating actin remodeling and Golgi organization via a signaling cascade involving RHOA, CIT and ROCK. Inhibits cell proliferation. The protein is E3 ubiquitin-protein ligase TTC3 (Ttc3) of Mus musculus (Mouse).